The following is a 1011-amino-acid chain: MTSVLDVTNRDRLIESESLAARTLQERLRLVEEVLVDVLAAESGQELVDLLRRLGALSSPEGHVLHAPEGELLKVIESLELNEAIRAARAFNLYFQIINIVEQHYEQQYNRERAAQEGLRRRSVMSEPISGVSGEGFPLPHTAANATDVRSGPSERLEHSLYEAIPATQQYGSFAWLFPRLQMLNVPPRHIQKLLDQLDIKLVFTAHPTEIVRQTIRDKQRRVARLLEQLDVLEGASPHLTDWNAQTLRAQLMEEIRLWWRTDELHQFKPEVLDEVEYTLHYFKEVIFAVIPKLYRRLEQSLHETFPALQPPRHRFCRFGSWVGGDRDGNPYVKPEVTWQTACYQRNLVLEEYIKSVERLINLLSLSLHWCDVLPDLLDSLEQDQRQLPSIYEQYAVRYRQEPYRLKLAYVLKRLQNTRDRNRALQTYCIRRNEAEELNNGQFYRHGEEFLAELLLIQRNLKETGLACRELDDLICQVEVFGFNLAALDIRQESTCHAEALNEITAYLGILPCPYTELSEAERTRWLLSELSTRRPLIPGELPFSDRTNEIIETFRMVRQLQQEFGTDLCNTYIISMSHEVSDLLEVLLFAKEAGLFDPATGASTLQAIPLFETVEDLKHAPAVLTQLFSLPFCRSYLGSNSTPFLQEVMLGYSDSNKDSGFLSSNWEIYKAQQQLQKIAESFGFQLRIFHGRGGSVGRGGGPAYAAILAQPAQTIKGRIKITEQGEVLASKYSLPELALFNLETVATAVIQASLLRSSIDEIEPWHEIMEELATRSRQCYRHLIYEQPEFIEFFNEVTPIQEISQLQISSRPTRRGGKKTLESLRAIPWVFSWTQTRFLLPAWYGVGTALKEFLEEKPAEHLSLLRYFYYKWPFFRMVISKVEMTLAKVDLEIARYYVQELSQPQNREAFCRLYDQIAQEYRLTTELVLTITGHERLLDGDPALQRSVQLRNRTIVPLGFLQVSLLKRLRQHNSQTTSGAILRSRYGRGELLRGALLTINGIAAGMRNTG.

Active-site residues include histidine 207 and lysine 658.

Belongs to the PEPCase type 1 family. Mg(2+) is required as a cofactor.

It catalyses the reaction oxaloacetate + phosphate = phosphoenolpyruvate + hydrogencarbonate. In terms of biological role, forms oxaloacetate, a four-carbon dicarboxylic acid source for the tricarboxylic acid cycle. This chain is Phosphoenolpyruvate carboxylase (ppc), found in Thermosynechococcus vestitus (strain NIES-2133 / IAM M-273 / BP-1).